The following is a 97-amino-acid chain: Aspartyl/glutamyl-tRNA(Asn/Gln) amidotransferase subunit C (97 aa).

The tract at residues A74 to E97 is disordered. The segment covering Q85–E97 has biased composition (basic and acidic residues).

It belongs to the GatC family. In terms of assembly, heterotrimer of A, B and C subunits.

It carries out the reaction L-glutamyl-tRNA(Gln) + L-glutamine + ATP + H2O = L-glutaminyl-tRNA(Gln) + L-glutamate + ADP + phosphate + H(+). It catalyses the reaction L-aspartyl-tRNA(Asn) + L-glutamine + ATP + H2O = L-asparaginyl-tRNA(Asn) + L-glutamate + ADP + phosphate + 2 H(+). Functionally, allows the formation of correctly charged Asn-tRNA(Asn) or Gln-tRNA(Gln) through the transamidation of misacylated Asp-tRNA(Asn) or Glu-tRNA(Gln) in organisms which lack either or both of asparaginyl-tRNA or glutaminyl-tRNA synthetases. The reaction takes place in the presence of glutamine and ATP through an activated phospho-Asp-tRNA(Asn) or phospho-Glu-tRNA(Gln). The protein is Aspartyl/glutamyl-tRNA(Asn/Gln) amidotransferase subunit C of Corynebacterium kroppenstedtii (strain DSM 44385 / JCM 11950 / CIP 105744 / CCUG 35717).